Here is a 392-residue protein sequence, read N- to C-terminus: Flagellar P-ring protein (392 aa).

An N-terminal signal peptide occupies residues 1–38 (MKPFARRALLTAEPIRALLLAASLLAATLGLMPAEAFG).

The protein belongs to the FlgI family. In terms of assembly, the basal body constitutes a major portion of the flagellar organelle and consists of four rings (L,P,S, and M) mounted on a central rod.

The protein localises to the periplasm. Its subcellular location is the bacterial flagellum basal body. In terms of biological role, assembles around the rod to form the L-ring and probably protects the motor/basal body from shearing forces during rotation. In Paramagnetospirillum magneticum (strain ATCC 700264 / AMB-1) (Magnetospirillum magneticum), this protein is Flagellar P-ring protein.